Here is a 266-residue protein sequence, read N- to C-terminus: MNITPFPTLSPATIDAINVIGQWLAQDDFSGEVPYQADCVILAGNAVMPTIDAACKIARDQQIPLLISGGIGHSTTFLYSAIAQHPHYNTIRTTGRAEATILADIAHQFWHIPHEKIWIEDQSTNCGENARFSIALLNQAVERVHTAIVVQDPTMQRRTMATFRRMTGDNPDAPRWLSYPGFVPQLGNNADSVIFINQLQGLWPVERYLSLLTGELPRLRDDSDGYGPRGRDFIVHVDFPAEVIHAWQTLKHDAVLIEAMESRSLR.

This sequence to S.coelicolor SCO4629. In terms of assembly, monomer.

In terms of biological role, binds S-adenosyl-L-methionine (AdoMet). This chain is Protein YdcF (ydcF), found in Escherichia coli (strain K12).